The sequence spans 694 residues: Type VI secretion system spike protein VgrG2 (694 aa).

Belongs to the VgrG protein family.

Its subcellular location is the secreted. Functionally, part of the type VI secretion system specialized secretion system, which delivers several virulence factors in both prokaryotic and eukaryotic cells during infection. Forms the spike at the tip of the elongating tube formed by haemolysin co-regulated protein Hcp. Allows the delivery of the VasX antibacterial toxin to target cells where it exerts its toxicity. This is Type VI secretion system spike protein VgrG2 (vgrG2) from Vibrio cholerae serotype O1 (strain ATCC 39315 / El Tor Inaba N16961).